A 569-amino-acid chain; its full sequence is Formate--tetrahydrofolate ligase (569 aa).

Position 64-71 (64-71 (TPHGEGKT)) interacts with ATP.

The protein belongs to the formate--tetrahydrofolate ligase family.

The enzyme catalyses (6S)-5,6,7,8-tetrahydrofolate + formate + ATP = (6R)-10-formyltetrahydrofolate + ADP + phosphate. Its pathway is one-carbon metabolism; tetrahydrofolate interconversion. This is Formate--tetrahydrofolate ligase from Shewanella sp. (strain MR-7).